Here is a 118-residue protein sequence, read N- to C-terminus: Large ribosomal subunit protein bL20 (118 aa).

This sequence belongs to the bacterial ribosomal protein bL20 family.

In terms of biological role, binds directly to 23S ribosomal RNA and is necessary for the in vitro assembly process of the 50S ribosomal subunit. It is not involved in the protein synthesizing functions of that subunit. This Staphylococcus aureus (strain Mu3 / ATCC 700698) protein is Large ribosomal subunit protein bL20.